The chain runs to 627 residues: MEDRQTRLFLALILSMGIWMGVNYFFFPNTSTKKNTETKQTQSDKTSENTKQQITSGKTKESNSADPVVQKEKITPFDTKKSFIVTDSYIVEFSSLGGKISKFYMKDFTGPNGELIQVARKNPETVVVDGKSYQAVELSRDKGFDFNFSDSLVEISDSPWNYIQFSLTEDKINHSISFSAVSPDRSYQLKKEFRFYPSENYFKLSISIINFSKEKLSFASQKNVRYLRTFGSLGPYPKDRPLSDRDTANFFRFYYLGGSFQDTLDGSSSVGFWSSVGNFFTGNSGTDESFSIKTDKESGVDFAGTGSRYFIAVADPLDHKPHGIVLDNRPKNESGAVLVYDNILLNPGENYNLDFASYIGIRESEGMAFKNPEFDPSQSKNSPFVGLSSDLNKSFNQGITTPFRNGIIWILKQIYRFTIPNYGWSIIIFAILFKLVFYPLNQKQADSMKKMQELSPQLKTINEKFANDPKMRQQKTMELYKKNNVNPVGGCLPMVIQIPIFIALYTAFSDTIDLWNSPFLWVKDLSEPDVIWTSPAIPYFTQTGIGLNLLALLMVGTQVFQTRMTSVSMDPNQKMLMYVMPVMMLYIFWNMPSGVTLYWTFQNVLSIGQQWITNHLKKTEEKKKAKV.

The helical transmembrane segment at leucine 8–proline 28 threads the bilayer. The segment covering lysine 33 to glycine 57 has biased composition (polar residues). The disordered stretch occupies residues lysine 33–valine 68. Basic and acidic residues predominate over residues lysine 58–valine 68. A run of 4 helical transmembrane segments spans residues phenylalanine 417–phenylalanine 437, valine 488–phenylalanine 508, alanine 536–glycine 556, and methionine 575–valine 595.

The protein belongs to the OXA1/ALB3/YidC family. Type 1 subfamily. As to quaternary structure, interacts with the Sec translocase complex via SecD. Specifically interacts with transmembrane segments of nascent integral membrane proteins during membrane integration.

The protein resides in the cell inner membrane. Its function is as follows. Required for the insertion and/or proper folding and/or complex formation of integral membrane proteins into the membrane. Involved in integration of membrane proteins that insert both dependently and independently of the Sec translocase complex, as well as at least some lipoproteins. Aids folding of multispanning membrane proteins. This chain is Membrane protein insertase YidC, found in Leptospira interrogans serogroup Icterohaemorrhagiae serovar copenhageni (strain Fiocruz L1-130).